A 1090-amino-acid chain; its full sequence is Vinculin (1090 aa).

2 repeat units span residues 339 to 446 (DADN…SQNS) and 455 to 561 (QNAQ…DLGD). The segment at 339-561 (DADNVTVMRK…LKNALRDLGD (223 aa)) is 2 X repeats. Disordered stretches follow at residues 811–842 (GVPMSNGRHSSYQESISRASPYNPPPPSSQVI) and 864–895 (DIPAPPRPPPPVELSPPPRPPPPPEYDEEEET). Residues 817 to 830 (GRHSSYQESISRAS) are compositionally biased toward polar residues. Residues 866-887 (PAPPRPPPPVELSPPPRPPPPP) are compositionally biased toward pro residues.

The protein belongs to the vinculin/alpha-catenin family. As to quaternary structure, may interact with sorb-1. In terms of tissue distribution, expressed in gonadal sheath cells and the spermatheca. Expressed in body wall muscles.

Its subcellular location is the cytoplasm. The protein localises to the cytoskeleton. It localises to the cell junction. The protein resides in the adherens junction. It is found in the cell membrane. Its subcellular location is the focal adhesion. Functionally, involved in cell adhesion. May be involved in the attachment of the actin-based microfilaments to the plasma membrane. Involved in ovulation. The protein is Vinculin of Caenorhabditis elegans.